A 101-amino-acid polypeptide reads, in one-letter code: NAD(P)H-quinone oxidoreductase subunit 4L, chloroplastic (101 aa).

3 consecutive transmembrane segments (helical) span residues 2 to 22 (ILEHVLVLSAYLFLIGLYGLI), 32 to 52 (MCLELILNAVNMNFVTFSDFF), and 61 to 81 (IFCIFVIAIAAAEAAIGLAIV).

It belongs to the complex I subunit 4L family. NDH is composed of at least 16 different subunits, 5 of which are encoded in the nucleus.

It localises to the plastid. The protein resides in the chloroplast thylakoid membrane. It catalyses the reaction a plastoquinone + NADH + (n+1) H(+)(in) = a plastoquinol + NAD(+) + n H(+)(out). The catalysed reaction is a plastoquinone + NADPH + (n+1) H(+)(in) = a plastoquinol + NADP(+) + n H(+)(out). NDH shuttles electrons from NAD(P)H:plastoquinone, via FMN and iron-sulfur (Fe-S) centers, to quinones in the photosynthetic chain and possibly in a chloroplast respiratory chain. The immediate electron acceptor for the enzyme in this species is believed to be plastoquinone. Couples the redox reaction to proton translocation, and thus conserves the redox energy in a proton gradient. The sequence is that of NAD(P)H-quinone oxidoreductase subunit 4L, chloroplastic from Lepidium virginicum (Virginia pepperweed).